Here is a 423-residue protein sequence, read N- to C-terminus: UDP-N-acetylglucosamine 1-carboxyvinyltransferase 2 (423 aa).

23–24 (KN) serves as a coordination point for phosphoenolpyruvate. UDP-N-acetyl-alpha-D-glucosamine is bound at residue R93. Catalysis depends on C117, which acts as the Proton donor. C117 bears the 2-(S-cysteinyl)pyruvic acid O-phosphothioketal mark. UDP-N-acetyl-alpha-D-glucosamine is bound by residues 122–126 (RPIDQ), D305, and I327.

It belongs to the EPSP synthase family. MurA subfamily.

The protein localises to the cytoplasm. The catalysed reaction is phosphoenolpyruvate + UDP-N-acetyl-alpha-D-glucosamine = UDP-N-acetyl-3-O-(1-carboxyvinyl)-alpha-D-glucosamine + phosphate. It functions in the pathway cell wall biogenesis; peptidoglycan biosynthesis. Functionally, cell wall formation. Adds enolpyruvyl to UDP-N-acetylglucosamine. In Listeria monocytogenes serotype 4b (strain F2365), this protein is UDP-N-acetylglucosamine 1-carboxyvinyltransferase 2.